The primary structure comprises 806 residues: Glycerol-3-phosphate acyltransferase (806 aa).

The HXXXXD motif motif lies at 305-310 (CHRSHM).

It belongs to the GPAT/DAPAT family.

The protein localises to the cell inner membrane. It catalyses the reaction sn-glycerol 3-phosphate + an acyl-CoA = a 1-acyl-sn-glycero-3-phosphate + CoA. Its pathway is phospholipid metabolism; CDP-diacylglycerol biosynthesis; CDP-diacylglycerol from sn-glycerol 3-phosphate: step 1/3. The sequence is that of Glycerol-3-phosphate acyltransferase from Salmonella paratyphi A (strain ATCC 9150 / SARB42).